We begin with the raw amino-acid sequence, 505 residues long: Maturase K (505 aa).

The protein belongs to the intron maturase 2 family. MatK subfamily.

The protein localises to the plastid. Its subcellular location is the chloroplast. Its function is as follows. Usually encoded in the trnK tRNA gene intron. Probably assists in splicing its own and other chloroplast group II introns. This Physcomitrium patens (Spreading-leaved earth moss) protein is Maturase K.